Here is a 229-residue protein sequence, read N- to C-terminus: uncharacterized protein (229 aa).

Positions 1–41 (MRSAKVGVARQLETKKPQTGRKISTSSRGTIHSQQSQPEDI) are disordered. Residues 21-39 (RKISTSSRGTIHSQQSQPE) show a composition bias toward polar residues. 4 consecutive EF-hand domains span residues 48 to 83 (KELK…IGLH), 84 to 119 (ANKA…SQNI), 123 to 158 (TNEE…FGDF), and 159 to 193 (DDEL…YLLN). The Ca(2+) site is built by aspartate 61, aspartate 63, serine 65, glutamate 72, aspartate 97, aspartate 99, asparagine 101, glutamate 103, glutamate 108, aspartate 136, aspartate 138, asparagine 140, and glutamate 147. Over residues 194 to 217 (DPKHDIDTGDSDVERYDDRHDDRA) the composition is skewed to basic and acidic residues. Residues 194 to 229 (DPKHDIDTGDSDVERYDDRHDDRASPMPNHLSTVPE) form a disordered region.

This is an uncharacterized protein from Caenorhabditis elegans.